Reading from the N-terminus, the 83-residue chain is Small ribosomal subunit protein bS20 (83 aa).

Positions 1 to 21 (MPNIKSAIKRVRTTETAEERN) are disordered. A compositionally biased stretch (basic and acidic residues) spans 12–21 (RTTETAEERN).

The protein belongs to the bacterial ribosomal protein bS20 family.

In terms of biological role, binds directly to 16S ribosomal RNA. The polypeptide is Small ribosomal subunit protein bS20 (Staphylococcus epidermidis (strain ATCC 35984 / DSM 28319 / BCRC 17069 / CCUG 31568 / BM 3577 / RP62A)).